We begin with the raw amino-acid sequence, 347 residues long: MPLNRVREAIEAIKKGEMIIMMDDEDRENEGDLVYAAAFSTPEKVNFMVSEAKGLVCVCVTSTCSDRLGLAPMVRENNSQHETAFTVSIDARECSTGISAFERDLTIRKMVDGTSKPEDFVRPGHIFPLIAKEGGVLVRTGHTEGSVDICKLAGVAPVAVICEIIKKDGHMARRDDLMEFAKEHHLKIVYISDLIEYRMQNEMLILIKERSEVEFLGKRAERYVFQDHHRREHTLYAFGKIIDNSLVKYHTVGKDLSLLESEKKYSTLMQAIKKIQEENGLIIFMDTPQNAAPQIKDFGIGAQMLRFLGIKNFRLLTSEENREYVGLSGFGLNVTEKIVLQGGPIQL.

A DHBP synthase region spans residues 1–200; it reads MPLNRVREAI…ISDLIEYRMQ (200 aa). Residues 27 to 28, aspartate 32, 139 to 143, and glutamate 163 each bind D-ribulose 5-phosphate; these read RE and RTGHT. A Mg(2+)-binding site is contributed by glutamate 28. Histidine 142 is a Mg(2+) binding site. Residues 201–347 are GTP cyclohydrolase II-like; that stretch reads NEMLILIKER…IVLQGGPIQL (147 aa).

It in the N-terminal section; belongs to the DHBP synthase family. In the C-terminal section; belongs to the GTP cyclohydrolase II family. The cofactor is Mg(2+). Mn(2+) is required as a cofactor.

The enzyme catalyses D-ribulose 5-phosphate = (2S)-2-hydroxy-3-oxobutyl phosphate + formate + H(+). It functions in the pathway cofactor biosynthesis; riboflavin biosynthesis; 2-hydroxy-3-oxobutyl phosphate from D-ribulose 5-phosphate: step 1/1. Its function is as follows. Catalyzes the conversion of D-ribulose 5-phosphate to formate and 3,4-dihydroxy-2-butanone 4-phosphate. This chain is 3,4-dihydroxy-2-butanone 4-phosphate synthase (ribB), found in Wolinella succinogenes (strain ATCC 29543 / DSM 1740 / CCUG 13145 / JCM 31913 / LMG 7466 / NCTC 11488 / FDC 602W) (Vibrio succinogenes).